The primary structure comprises 180 residues: Large ribosomal subunit protein uL6 (180 aa).

The protein belongs to the universal ribosomal protein uL6 family. Part of the 50S ribosomal subunit.

Its function is as follows. This protein binds to the 23S rRNA, and is important in its secondary structure. It is located near the subunit interface in the base of the L7/L12 stalk, and near the tRNA binding site of the peptidyltransferase center. In Clostridium botulinum (strain 657 / Type Ba4), this protein is Large ribosomal subunit protein uL6.